Here is a 159-residue protein sequence, read N- to C-terminus: Small ribosomal subunit protein uS17x (159 aa).

Belongs to the universal ribosomal protein uS17 family.

It localises to the cytoplasm. The sequence is that of Small ribosomal subunit protein uS17x (RPS11C) from Arabidopsis thaliana (Mouse-ear cress).